Reading from the N-terminus, the 87-residue chain is uncharacterized protein (87 aa).

This is an uncharacterized protein from Methanocaldococcus jannaschii (strain ATCC 43067 / DSM 2661 / JAL-1 / JCM 10045 / NBRC 100440) (Methanococcus jannaschii).